The chain runs to 364 residues: GDSL esterase/lipase At1g29660 (364 aa).

The first 26 residues, 1–26 (MESYLRKWCLVSVWVLLLGLGFKVKA), serve as a signal peptide directing secretion. Ser-39 functions as the Nucleophile in the catalytic mechanism. Active-site charge relay system residues include Asp-328 and His-331.

This sequence belongs to the 'GDSL' lipolytic enzyme family. In terms of tissue distribution, found in phloem exudates.

It is found in the secreted. It localises to the extracellular space. Its subcellular location is the apoplast. In terms of biological role, involved in EDS1-dependent systemic acquired resistance, maybe in phloem-mediated long-distance signaling. This Arabidopsis thaliana (Mouse-ear cress) protein is GDSL esterase/lipase At1g29660.